We begin with the raw amino-acid sequence, 326 residues long: Putative ABC transporter ATP-binding protein MPN_334 (326 aa).

The ABC transporter domain maps to 7 to 239; the sequence is VEVKHLEKEF…NFGYRLKVNN (233 aa). Residue 42-49 participates in ATP binding; sequence GQNGAGKT.

This sequence belongs to the ABC transporter superfamily.

The sequence is that of Putative ABC transporter ATP-binding protein MPN_334 from Mycoplasma pneumoniae (strain ATCC 29342 / M129 / Subtype 1) (Mycoplasmoides pneumoniae).